Here is a 642-residue protein sequence, read N- to C-terminus: Kinesin-like protein KIN-7L (642 aa).

Positions 3 to 337 (KISVAVRFRP…LQFASRAKCV (335 aa)) constitute a Kinesin motor domain. Residues 12–27 (PPTTAAPAADQSPSST) are compositionally biased toward low complexity. Residues 12–33 (PPTTAAPAADQSPSSTGGDREW) are disordered. An ATP-binding site is contributed by 94–101 (GQTSSGKT). 2 coiled-coil regions span residues 343–428 (VNEI…SNTS) and 540–612 (RQQL…FSQA).

The protein belongs to the TRAFAC class myosin-kinesin ATPase superfamily. Kinesin family. KIN-7 subfamily.

The protein is Kinesin-like protein KIN-7L of Oryza sativa subsp. japonica (Rice).